Consider the following 428-residue polypeptide: MASTVPFSPAKVQMFQATNCHGHAGFGSSFAVPRTGPRPRSVAVRVSSEQEAAATVRAPSGRSIEECEADAVAGRFPAPSCVCQTPKAPDGTPEIRPLDMAKRPRRNRRSPALRAAFQETSISPANLVLPLFIHEGEEDAPIGAMPGCFRLGWQHGLLAEVYKARDVGVNSFVLFPKVPDALKSPTGVEAYNDNGLVPRTIRLLKDKFPDIIVYTDVALDPYSSDGHDGIVRKDGVILNDETVYQLCKQAVSQARAGADVVSPSNMMDGRVGAIRSALDAEGFNDVSIMSYTAKYASSFYGPFREALDSNPRFGDKKTYQMNPANYREALLETAADEAEGADILLVKPGLPYLDIIRLSRDNSALPIAAYQVSGEYSMIKAGGALNMIDEEKVMMESLMCLRRAGADVILTYFARQPPAVLCGMGTAK.

Lysine 294 (schiff-base intermediate with substrate) is an active-site residue. Residues arginine 304 and lysine 316 each coordinate 5-aminolevulinate. Glutamate 332 lines the Mg(2+) pocket. Lysine 347 (schiff-base intermediate with substrate) is an active-site residue. 5-aminolevulinate is bound by residues serine 373 and tyrosine 412.

The protein belongs to the ALAD family. As to quaternary structure, homooctamer. The cofactor is Mg(2+).

Its subcellular location is the plastid. The protein localises to the chloroplast. The catalysed reaction is 2 5-aminolevulinate = porphobilinogen + 2 H2O + H(+). The protein operates within porphyrin-containing compound metabolism; protoporphyrin-IX biosynthesis; coproporphyrinogen-III from 5-aminolevulinate: step 1/4. In terms of biological role, catalyzes an early step in the biosynthesis of tetrapyrroles. Binds two molecules of 5-aminolevulinate per subunit, each at a distinct site, and catalyzes their condensation to form porphobilinogen. In Hordeum vulgare (Barley), this protein is Delta-aminolevulinic acid dehydratase, chloroplastic (HEMB).